The primary structure comprises 734 residues: Photosystem I P700 chlorophyll a apoprotein A2 (734 aa).

8 consecutive transmembrane segments (helical) span residues Ile46–Ala69, Leu135–Gln158, Leu175–Ile199, Met273–Tyr291, Leu330–Tyr353, Ala369–Val395, Ala417–His439, and Phe517–Val535. [4Fe-4S] cluster-binding residues include Cys559 and Cys568. 2 consecutive transmembrane segments (helical) span residues Ala575–Trp596 and Leu643–Ile665. The chlorophyll a site is built by His654, Met662, and Tyr670. Phylloquinone is bound at residue Trp671. The chain crosses the membrane as a helical span at residues Leu707–Ala727.

Belongs to the PsaA/PsaB family. In terms of assembly, the PsaA/B heterodimer binds the P700 chlorophyll special pair and subsequent electron acceptors. PSI consists of a core antenna complex that captures photons, and an electron transfer chain that converts photonic excitation into a charge separation. The eukaryotic PSI reaction center is composed of at least 11 subunits. It depends on P700 is a chlorophyll a/chlorophyll a' dimer, A0 is one or more chlorophyll a, A1 is one or both phylloquinones and FX is a shared 4Fe-4S iron-sulfur center. as a cofactor.

It localises to the plastid. It is found in the chloroplast thylakoid membrane. The catalysed reaction is reduced [plastocyanin] + hnu + oxidized [2Fe-2S]-[ferredoxin] = oxidized [plastocyanin] + reduced [2Fe-2S]-[ferredoxin]. PsaA and PsaB bind P700, the primary electron donor of photosystem I (PSI), as well as the electron acceptors A0, A1 and FX. PSI is a plastocyanin/cytochrome c6-ferredoxin oxidoreductase, converting photonic excitation into a charge separation, which transfers an electron from the donor P700 chlorophyll pair to the spectroscopically characterized acceptors A0, A1, FX, FA and FB in turn. Oxidized P700 is reduced on the lumenal side of the thylakoid membrane by plastocyanin or cytochrome c6. This is Photosystem I P700 chlorophyll a apoprotein A2 from Pyropia yezoensis (Susabi-nori).